Consider the following 388-residue polypeptide: Succinate--CoA ligase [ADP-forming] subunit beta (388 aa).

An ATP-grasp domain is found at 9 to 244 (KEILRKFGVA…PDEEDPKETQ (236 aa)). ATP is bound by residues lysine 46, 53–55 (GRG), glutamate 99, cysteine 102, and glutamate 107. Mg(2+) contacts are provided by asparagine 199 and aspartate 213. Substrate-binding positions include asparagine 264 and 321 to 323 (GIM).

The protein belongs to the succinate/malate CoA ligase beta subunit family. In terms of assembly, heterotetramer of two alpha and two beta subunits. Requires Mg(2+) as cofactor.

The catalysed reaction is succinate + ATP + CoA = succinyl-CoA + ADP + phosphate. The enzyme catalyses GTP + succinate + CoA = succinyl-CoA + GDP + phosphate. Its pathway is carbohydrate metabolism; tricarboxylic acid cycle; succinate from succinyl-CoA (ligase route): step 1/1. Its function is as follows. Succinyl-CoA synthetase functions in the citric acid cycle (TCA), coupling the hydrolysis of succinyl-CoA to the synthesis of either ATP or GTP and thus represents the only step of substrate-level phosphorylation in the TCA. The beta subunit provides nucleotide specificity of the enzyme and binds the substrate succinate, while the binding sites for coenzyme A and phosphate are found in the alpha subunit. This chain is Succinate--CoA ligase [ADP-forming] subunit beta, found in Anaeromyxobacter dehalogenans (strain 2CP-1 / ATCC BAA-258).